The chain runs to 372 residues: Putative glutamate--cysteine ligase 2 (372 aa).

It belongs to the glutamate--cysteine ligase type 2 family. YbdK subfamily. As to quaternary structure, homodimer.

It catalyses the reaction L-cysteine + L-glutamate + ATP = gamma-L-glutamyl-L-cysteine + ADP + phosphate + H(+). Its function is as follows. ATP-dependent carboxylate-amine ligase which exhibits weak glutamate--cysteine ligase activity. This chain is Putative glutamate--cysteine ligase 2, found in Citrobacter koseri (strain ATCC BAA-895 / CDC 4225-83 / SGSC4696).